The sequence spans 223 residues: Deoxyribose-phosphate aldolase (223 aa).

D91 functions as the Proton donor/acceptor in the catalytic mechanism. The active-site Schiff-base intermediate with acetaldehyde is K153. K182 acts as the Proton donor/acceptor in catalysis.

It belongs to the DeoC/FbaB aldolase family. DeoC type 1 subfamily.

The protein resides in the cytoplasm. The catalysed reaction is 2-deoxy-D-ribose 5-phosphate = D-glyceraldehyde 3-phosphate + acetaldehyde. The protein operates within carbohydrate degradation; 2-deoxy-D-ribose 1-phosphate degradation; D-glyceraldehyde 3-phosphate and acetaldehyde from 2-deoxy-alpha-D-ribose 1-phosphate: step 2/2. Catalyzes a reversible aldol reaction between acetaldehyde and D-glyceraldehyde 3-phosphate to generate 2-deoxy-D-ribose 5-phosphate. In Yersinia pseudotuberculosis serotype O:1b (strain IP 31758), this protein is Deoxyribose-phosphate aldolase.